A 209-amino-acid chain; its full sequence is Kynurenine formamidase (209 aa).

F18 contacts substrate. Zn(2+) contacts are provided by H48, H52, and D54. Catalysis depends on H58, which acts as the Proton donor/acceptor. Residues H160 and E172 each contribute to the Zn(2+) site.

This sequence belongs to the Cyclase 1 superfamily. KynB family. Homodimer. The cofactor is Zn(2+).

The catalysed reaction is N-formyl-L-kynurenine + H2O = L-kynurenine + formate + H(+). It participates in amino-acid degradation; L-tryptophan degradation via kynurenine pathway; L-kynurenine from L-tryptophan: step 2/2. In terms of biological role, catalyzes the hydrolysis of N-formyl-L-kynurenine to L-kynurenine, the second step in the kynurenine pathway of tryptophan degradation. This Bordetella bronchiseptica (strain ATCC BAA-588 / NCTC 13252 / RB50) (Alcaligenes bronchisepticus) protein is Kynurenine formamidase.